The chain runs to 244 residues: Phosphoribosyl isomerase A (244 aa).

Aspartate 10 (proton acceptor) is an active-site residue. Catalysis depends on aspartate 129, which acts as the Proton donor.

The protein belongs to the HisA/HisF family.

It is found in the cytoplasm. The enzyme catalyses 1-(5-phospho-beta-D-ribosyl)-5-[(5-phospho-beta-D-ribosylamino)methylideneamino]imidazole-4-carboxamide = 5-[(5-phospho-1-deoxy-D-ribulos-1-ylimino)methylamino]-1-(5-phospho-beta-D-ribosyl)imidazole-4-carboxamide. It catalyses the reaction N-(5-phospho-beta-D-ribosyl)anthranilate = 1-(2-carboxyphenylamino)-1-deoxy-D-ribulose 5-phosphate. Its pathway is amino-acid biosynthesis; L-histidine biosynthesis; L-histidine from 5-phospho-alpha-D-ribose 1-diphosphate: step 4/9. It functions in the pathway amino-acid biosynthesis; L-tryptophan biosynthesis; L-tryptophan from chorismate: step 3/5. In terms of biological role, involved in both the histidine and tryptophan biosynthetic pathways. The polypeptide is Phosphoribosyl isomerase A (Mycobacterium ulcerans (strain Agy99)).